A 260-amino-acid chain; its full sequence is Snake venom serine protease salmobin (260 aa).

The signal sequence occupies residues 1–18; sequence MVLIKVLANHLILQLSYA. Positions 19–24 are excised as a propeptide; that stretch reads QKSSEL. One can recognise a Peptidase S1 domain in the interval 25 to 251; it reads VIGGDECNIN…YTDWIQSIIA (227 aa). Intrachain disulfides connect cysteine 31–cysteine 165, cysteine 52–cysteine 68, cysteine 102–cysteine 258, cysteine 144–cysteine 212, cysteine 176–cysteine 191, and cysteine 202–cysteine 227. Histidine 67 functions as the Charge relay system in the catalytic mechanism. Asparagine 105 carries N-linked (GlcNAc...) asparagine glycosylation. Aspartate 112 acts as the Charge relay system in catalysis. Asparagine 123 and asparagine 156 each carry an N-linked (GlcNAc...) asparagine glycan. Serine 206 (charge relay system) is an active-site residue.

It belongs to the peptidase S1 family. Snake venom subfamily. As to quaternary structure, monomer. Expressed by the venom gland.

It localises to the secreted. Its function is as follows. Snake venom serine protease that may act in the hemostasis system of the prey. This Gloydius halys (Chinese water mocassin) protein is Snake venom serine protease salmobin.